A 440-amino-acid chain; its full sequence is Glycerol-3-phosphate dehydrogenase [NAD(+)], chloroplastic (440 aa).

The N-terminal 47 residues, 1-47 (MAAAAAATFLPHTPTPRRRLAVAVHSPTRRRLSLVFSGPPDGALSVA), are a transit peptide targeting the chloroplast. Residues 57–76 (EEAAAAVSAPRGGGGGGGKE) form a disordered region. Residues 114 to 119 (GGGSFG), F191, K214, and A248 contribute to the NAD(+) site. Residue K214 participates in substrate binding. K299 functions as the Proton acceptor in the catalytic mechanism. The NAD(+) site is built by R363 and E389. 363-364 (RN) is a substrate binding site.

This sequence belongs to the NAD-dependent glycerol-3-phosphate dehydrogenase family.

It localises to the plastid. Its subcellular location is the chloroplast. It catalyses the reaction sn-glycerol 3-phosphate + NAD(+) = dihydroxyacetone phosphate + NADH + H(+). It functions in the pathway membrane lipid metabolism; glycerophospholipid metabolism. In terms of biological role, required to supply glycerol-3-phosphate in the chloroplast for the synthesis of glycerolipids. This chain is Glycerol-3-phosphate dehydrogenase [NAD(+)], chloroplastic, found in Oryza sativa subsp. japonica (Rice).